The following is a 245-amino-acid chain: 1-(5-phosphoribosyl)-5-[(5-phosphoribosylamino)methylideneamino] imidazole-4-carboxamide isomerase (245 aa).

D7 acts as the Proton acceptor in catalysis. Catalysis depends on D129, which acts as the Proton donor.

The protein belongs to the HisA/HisF family.

It localises to the cytoplasm. The catalysed reaction is 1-(5-phospho-beta-D-ribosyl)-5-[(5-phospho-beta-D-ribosylamino)methylideneamino]imidazole-4-carboxamide = 5-[(5-phospho-1-deoxy-D-ribulos-1-ylimino)methylamino]-1-(5-phospho-beta-D-ribosyl)imidazole-4-carboxamide. The protein operates within amino-acid biosynthesis; L-histidine biosynthesis; L-histidine from 5-phospho-alpha-D-ribose 1-diphosphate: step 4/9. The sequence is that of 1-(5-phosphoribosyl)-5-[(5-phosphoribosylamino)methylideneamino] imidazole-4-carboxamide isomerase from Escherichia coli O81 (strain ED1a).